A 1028-amino-acid polypeptide reads, in one-letter code: Receptor-type guanylate cyclase gcy-13 (1028 aa).

6 N-linked (GlcNAc...) asparagine glycosylation sites follow: Asn-58, Asn-156, Asn-324, Asn-337, Asn-377, and Asn-394. Residues 438–458 (IVVIVAVIIVLCCAAAAIAAF) form a helical membrane-spanning segment. Topologically, residues 459 to 1028 (LVIKARRDEE…WLLGMKEESA (570 aa)) are cytoplasmic. The interval 491–511 (ESHHSSRSLQSNSTTTTGTTG) is disordered. Over residues 497–511 (RSLQSNSTTTTGTTG) the composition is skewed to low complexity. A Protein kinase domain is found at 499–770 (LQSNSTTTTG…DMVNKLMKNM (272 aa)). The stretch at 786-817 (SVLEKHASSLEDEVQERMKELVEEKKKSDILL) forms a coiled coil. One can recognise a Guanylate cyclase domain in the interval 844-974 (TIFFSDVVGF…DTVNTASRME (131 aa)).

It belongs to the adenylyl cyclase class-4/guanylyl cyclase family. As to expression, expressed bilaterally in RIM interneurons.

The protein resides in the cell membrane. It catalyses the reaction GTP = 3',5'-cyclic GMP + diphosphate. Guanylate cyclase involved in the production of the second messenger cGMP. In Caenorhabditis elegans, this protein is Receptor-type guanylate cyclase gcy-13.